Reading from the N-terminus, the 382-residue chain is Anhydro-N-acetylmuramic acid kinase (382 aa).

9 to 16 (GTSLDGID) contacts ATP.

It belongs to the anhydro-N-acetylmuramic acid kinase family.

The catalysed reaction is 1,6-anhydro-N-acetyl-beta-muramate + ATP + H2O = N-acetyl-D-muramate 6-phosphate + ADP + H(+). Its pathway is amino-sugar metabolism; 1,6-anhydro-N-acetylmuramate degradation. It functions in the pathway cell wall biogenesis; peptidoglycan recycling. In terms of biological role, catalyzes the specific phosphorylation of 1,6-anhydro-N-acetylmuramic acid (anhMurNAc) with the simultaneous cleavage of the 1,6-anhydro ring, generating MurNAc-6-P. Is required for the utilization of anhMurNAc either imported from the medium or derived from its own cell wall murein, and thus plays a role in cell wall recycling. The polypeptide is Anhydro-N-acetylmuramic acid kinase (Bacillus cereus (strain G9842)).